The sequence spans 319 residues: MTMPPLTLYLAAPRGFCAGVDRAIKIVEMALEKWGAPVYVRHEIVHNKFVVDRLRDMGAVFVEELDEAPTDRPVIFSAHGVPKAIPAEAERRNMVYVDATCPLVSKVHLEAERHHENGLQMIMIGHAGHPETVGTMGQLPEGEVLLVETVEDVAGLEVRDPERLAYITQTTLSIDDTAAIVAALRERFPAIAIPRKEDICYATTNRQGAVKAIAGRIDALLVIGAPNSSNSKRLVEVGRAAGCRVAQLVQRATDIDWEALQGATSVGVAAGASAPEVLVDEVIAAFRARFDTTVKAVETVKERVEFKVPRILREPAETP.

C17 is a [4Fe-4S] cluster binding site. (2E)-4-hydroxy-3-methylbut-2-enyl diphosphate is bound by residues H46 and H79. Dimethylallyl diphosphate-binding residues include H46 and H79. Positions 46 and 79 each coordinate isopentenyl diphosphate. Residue C101 coordinates [4Fe-4S] cluster. (2E)-4-hydroxy-3-methylbut-2-enyl diphosphate is bound at residue H129. Residue H129 coordinates dimethylallyl diphosphate. H129 is a binding site for isopentenyl diphosphate. The Proton donor role is filled by E131. A (2E)-4-hydroxy-3-methylbut-2-enyl diphosphate-binding site is contributed by T170. C200 is a binding site for [4Fe-4S] cluster. (2E)-4-hydroxy-3-methylbut-2-enyl diphosphate-binding residues include S228, S229, N230, and S273. 4 residues coordinate dimethylallyl diphosphate: S228, S229, N230, and S273. Positions 228, 229, 230, and 273 each coordinate isopentenyl diphosphate.

Belongs to the IspH family. Requires [4Fe-4S] cluster as cofactor.

The enzyme catalyses isopentenyl diphosphate + 2 oxidized [2Fe-2S]-[ferredoxin] + H2O = (2E)-4-hydroxy-3-methylbut-2-enyl diphosphate + 2 reduced [2Fe-2S]-[ferredoxin] + 2 H(+). It carries out the reaction dimethylallyl diphosphate + 2 oxidized [2Fe-2S]-[ferredoxin] + H2O = (2E)-4-hydroxy-3-methylbut-2-enyl diphosphate + 2 reduced [2Fe-2S]-[ferredoxin] + 2 H(+). It participates in isoprenoid biosynthesis; dimethylallyl diphosphate biosynthesis; dimethylallyl diphosphate from (2E)-4-hydroxy-3-methylbutenyl diphosphate: step 1/1. Its pathway is isoprenoid biosynthesis; isopentenyl diphosphate biosynthesis via DXP pathway; isopentenyl diphosphate from 1-deoxy-D-xylulose 5-phosphate: step 6/6. Functionally, catalyzes the conversion of 1-hydroxy-2-methyl-2-(E)-butenyl 4-diphosphate (HMBPP) into a mixture of isopentenyl diphosphate (IPP) and dimethylallyl diphosphate (DMAPP). Acts in the terminal step of the DOXP/MEP pathway for isoprenoid precursor biosynthesis. The protein is 4-hydroxy-3-methylbut-2-enyl diphosphate reductase of Cereibacter sphaeroides (strain ATCC 17029 / ATH 2.4.9) (Rhodobacter sphaeroides).